Here is an 85-residue protein sequence, read N- to C-terminus: Large ribosomal subunit protein bL27 (85 aa).

The disordered stretch occupies residues 1 to 21; sequence MAHKKAGGSTRNGRDSEGKRL.

The protein belongs to the bacterial ribosomal protein bL27 family.

This is Large ribosomal subunit protein bL27 from Hamiltonella defensa subsp. Acyrthosiphon pisum (strain 5AT).